Reading from the N-terminus, the 78-residue chain is uncharacterized protein (78 aa).

The signal sequence occupies residues 1–22 (MFKKSVLFATLLSGVMAFSTNA).

Belongs to the BhsA/McbA family.

It localises to the periplasm. Its function is as follows. Probably involved in reactive chlorine species (RCS) stress resistance. This is an uncharacterized protein from Escherichia coli (strain K12).